The chain runs to 253 residues: 2-C-methyl-D-erythritol 4-phosphate cytidylyltransferase (253 aa).

Positions 1–28 (MSVSSRPGRRRFALIPSAGTGTRAGGDL) are disordered.

Belongs to the IspD/TarI cytidylyltransferase family. IspD subfamily.

The catalysed reaction is 2-C-methyl-D-erythritol 4-phosphate + CTP + H(+) = 4-CDP-2-C-methyl-D-erythritol + diphosphate. It participates in isoprenoid biosynthesis; isopentenyl diphosphate biosynthesis via DXP pathway; isopentenyl diphosphate from 1-deoxy-D-xylulose 5-phosphate: step 2/6. Its function is as follows. Catalyzes the formation of 4-diphosphocytidyl-2-C-methyl-D-erythritol from CTP and 2-C-methyl-D-erythritol 4-phosphate (MEP). The sequence is that of 2-C-methyl-D-erythritol 4-phosphate cytidylyltransferase from Ralstonia nicotianae (strain ATCC BAA-1114 / GMI1000) (Ralstonia solanacearum).